An 85-amino-acid polypeptide reads, in one-letter code: Large ribosomal subunit protein bL31B (85 aa).

This sequence belongs to the bacterial ribosomal protein bL31 family. Type B subfamily. In terms of assembly, part of the 50S ribosomal subunit.

This chain is Large ribosomal subunit protein bL31B, found in Pseudarthrobacter chlorophenolicus (strain ATCC 700700 / DSM 12829 / CIP 107037 / JCM 12360 / KCTC 9906 / NCIMB 13794 / A6) (Arthrobacter chlorophenolicus).